The sequence spans 90 residues: MDDPSFLTGRSTFAKRRRARRMNVCKCGAIMHNNKDCKSSSISSHKLDRLRFVKEGRVALTGETPVYRTWVKWVETEYHIYIVETSDDED.

The segment at 15–18 (KRRR) is basic.

The protein belongs to the carlaviruses nucleic acid-binding protein family.

Suppressor of viral-induced RNA silencing. The potential mechanism of action is based on sequestering siRNAs. The polypeptide is RNA silencing suppressor (ORF5) (Grapevine virus A (isolate Is 151) (GVA)).